The following is a 504-amino-acid chain: Tachykinin-like peptides receptor 86C (504 aa).

Over 1-84 the chain is Extracellular; the sequence is MSEIVDTELL…PYELPWEQKT (84 aa). Residues asparagine 12, asparagine 28, and asparagine 36 are each glycosylated (N-linked (GlcNAc...) asparagine). The chain crosses the membrane as a helical span at residues 85–108; that stretch reads IWAIIFGLMMFVAIAGNGIVLWIV. The Cytoplasmic segment spans residues 109 to 118; it reads TGHRSMRTVT. The chain crosses the membrane as a helical span at residues 119 to 143; that stretch reads NYFLLNLSIADLLMSSLNCVFNFIF. Topologically, residues 144–155 are extracellular; the sequence is MLNSDWPFGSIY. The chain crosses the membrane as a helical span at residues 156-179; the sequence is CTINNFVANVTVSTSVFTLVAISF. Residues 180-199 lie on the Cytoplasmic side of the membrane; that stretch reads DRYIAIVHPLKRRTSRRKVR. The helical transmembrane segment at 200–224 threads the bilayer; that stretch reads IILVLIWALSCVLSAPCLLYSSIMT. The Extracellular portion of the chain corresponds to 225–250; that stretch reads KHYYNGKSRTVCFMMWPDGRYPTSMA. Residues 251–275 traverse the membrane as a helical segment; sequence DYAYNLIILVLTYGIPMIVMLICYS. Topologically, residues 276–308 are cytoplasmic; it reads LMGRVLWGSRSIGENTDRQMESMKSKRKVVRMF. Residues 309 to 330 traverse the membrane as a helical segment; it reads IAIVSIFAICWLPYHLFFIYAY. Topologically, residues 331-343 are extracellular; that stretch reads HNNQVASTKYVQH. Residues 344–367 traverse the membrane as a helical segment; the sequence is MYLGFYWLAMSNAMVNPLIYYWMN. Over 368–504 the chain is Cytoplasmic; the sequence is KRFRMYFQRI…NPVELSPKQM (137 aa). The tract at residues 393 to 450 is disordered; the sequence is PKSRLTNKNSSNRHTRAETKSQWKRSTMETQIQQAPVTSSCREQRSAQQQQPPGSGTN. Polar residues-rich tracts occupy residues 395-404 and 416-450; these read SRLTNKNSSN and KRST…SGTN.

It belongs to the G-protein coupled receptor 1 family. In terms of tissue distribution, expressed in central nervous system, as well as in subsets of neurons in each segment of the developing ventral ganglia.

It is found in the cell membrane. Receptor for tachykinin-like peptides. This chain is Tachykinin-like peptides receptor 86C (TkR86C), found in Drosophila melanogaster (Fruit fly).